The sequence spans 444 residues: Acyl-CoA 6-desaturase (444 aa).

Over 1-122 the chain is Cytoplasmic; sequence MGKGGNQDEG…FRALRKTAED (122 aa). Residues 18–95 form the Cytochrome b5 heme-binding domain; sequence MPTFRWEEIQ…MKPLLIGELA (78 aa). The chain crosses the membrane as a helical span at residues 123–143; that stretch reads MNLFKSNQLFFLLHLAHIIAM. Residues 144–147 lie on the Lumenal side of the membrane; the sequence is ESIA. A helical transmembrane segment spans residues 148 to 168; it reads WFTLFYFGNGWIPTIITAFVL. The Cytoplasmic portion of the chain corresponds to 169–264; it reads ATSQAQAGWL…KYLPYNHQHE (96 aa). Positions 180–184 match the Histidine box-1 motif; that stretch reads HDYGH. Residues 217-221 carry the Histidine box-2 motif; that stretch reads HFQHH. Residues 265-285 form a helical membrane-spanning segment; sequence YFFLIGPPLLIPLYFQYQIIM. Residues 286 to 305 lie on the Lumenal side of the membrane; the sequence is TMIVRKYWADLAWAISYYTR. A helical membrane pass occupies residues 306–326; the sequence is FFITYIPFYGVLGSILFLNFI. Over 327–444 the chain is Cytoplasmic; the sequence is RFLESHWFVW…QLWLDAYLHK (118 aa). Positions 382–386 match the Histidine box-3 motif; it reads QIEHH.

Belongs to the fatty acid desaturase type 1 family.

The protein resides in the endoplasmic reticulum membrane. The enzyme catalyses (9Z,12Z)-octadecadienoyl-CoA + 2 Fe(II)-[cytochrome b5] + O2 + 2 H(+) = (6Z,9Z,12Z)-octadecatrienoyl-CoA + 2 Fe(III)-[cytochrome b5] + 2 H2O. It carries out the reaction (9Z,12Z,15Z)-octadecatrienoyl-CoA + 2 Fe(II)-[cytochrome b5] + O2 + 2 H(+) = (6Z,9Z,12Z,15Z)-octadecatetraenoyl-CoA + 2 Fe(III)-[cytochrome b5] + 2 H2O. It catalyses the reaction (9Z,12Z,15Z,18Z,21Z)-tetracosapentaenoyl-CoA + 2 Fe(II)-[cytochrome b5] + O2 + 2 H(+) = (6Z,9Z,12Z,15Z,18Z,21Z)-tetracosahexaenoyl-CoA + 2 Fe(III)-[cytochrome b5] + 2 H2O. The catalysed reaction is (11E)-octadecenoyl-CoA + 2 Fe(II)-[cytochrome b5] + O2 + 2 H(+) = (6Z,11E)-octadecadienoyl-CoA + 2 Fe(III)-[cytochrome b5] + 2 H2O. The enzyme catalyses (11Z,14Z)-eicosadienoyl-CoA + 2 Fe(II)-[cytochrome b5] + O2 + 2 H(+) = (8Z,11Z,14Z)-eicosatrienoyl-CoA + 2 Fe(III)-[cytochrome b5] + 2 H2O. It carries out the reaction (11Z,14Z,17Z)-eicosatrienoyl-CoA + 2 Fe(II)-[cytochrome b5] + O2 + 2 H(+) = (8Z,11Z,14Z,17Z)-eicosatetraenoyl-CoA + 2 Fe(III)-[cytochrome b5] + 2 H2O. It functions in the pathway lipid metabolism; polyunsaturated fatty acid biosynthesis. In terms of biological role, involved in the biosynthesis of highly unsaturated fatty acids (HUFA) from the essential polyunsaturated fatty acids (PUFA) linoleic acid (LA) (18:2n-6) and alpha-linolenic acid (ALA) (18:3n-3) precursors, acting as a fatty acyl-coenzyme A (CoA) desaturase that introduces a cis double bond at carbon 6 of the fatty acyl chain. Catalyzes the first and rate limiting step in this pathway which is the desaturation of LA (18:2n-6) and ALA (18:3n-3) into gamma-linoleate (GLA) (18:3n-6) and stearidonate (18:4n-3), respectively. Subsequently, in the biosynthetic pathway of HUFA n-3 series, it desaturates tetracosapentaenoate (24:5n-3) to tetracosahexaenoate (24:6n-3), which is then converted to docosahexaenoate (DHA)(22:6n-3), an important lipid for nervous system function. It can also desaturate (11E)-octadecenoate (trans-vaccenoate, a metabolite in the biohydrogenation pathway of LA and the predominant trans fatty acid in cow milk) at carbon 6 generating (6Z,11E)-octadecadienoate. In addition to Delta-6 activity, this enzyme exhibits Delta-8 activity with slight biases toward n-3 fatty acyl-CoA substrates. The polypeptide is Acyl-CoA 6-desaturase (FADS2) (Bos taurus (Bovine)).